The primary structure comprises 131 residues: Mediator of RNA polymerase II transcription subunit 31 (131 aa).

Ala2 carries the post-translational modification N-acetylalanine.

Belongs to the Mediator complex subunit 31 family. In terms of assembly, component of the Mediator complex, which is composed of MED1, MED4, MED6, MED7, MED8, MED9, MED10, MED11, MED12, MED13, MED13L, MED14, MED15, MED16, MED17, MED18, MED19, MED20, MED21, MED22, MED23, MED24, MED25, MED26, MED27, MED29, MED30, MED31, CCNC, CDK8 and CDC2L6/CDK11. The MED12, MED13, CCNC and CDK8 subunits form a distinct module termed the CDK8 module. Mediator containing the CDK8 module is less active than Mediator lacking this module in supporting transcriptional activation. Individual preparations of the Mediator complex lacking one or more distinct subunits have been variously termed ARC, CRSP, DRIP, PC2, SMCC and TRAP.

It is found in the nucleus. Component of the Mediator complex, a coactivator involved in the regulated transcription of nearly all RNA polymerase II-dependent genes. Mediator functions as a bridge to convey information from gene-specific regulatory proteins to the basal RNA polymerase II transcription machinery. Mediator is recruited to promoters by direct interactions with regulatory proteins and serves as a scaffold for the assembly of a functional preinitiation complex with RNA polymerase II and the general transcription factors. The chain is Mediator of RNA polymerase II transcription subunit 31 (MED31) from Homo sapiens (Human).